Reading from the N-terminus, the 162-residue chain is Probable cytosine deaminase (162 aa).

Residues Glu-8–Leu-132 form the CMP/dCMP-type deaminase domain. His-59 provides a ligand contact to Zn(2+). Glu-61 functions as the Proton donor in the catalytic mechanism. 2 residues coordinate Zn(2+): Cys-87 and Cys-90. Substrate is bound at residue Asp-159.

The protein belongs to the cytidine and deoxycytidylate deaminase family. As to quaternary structure, homodimer. It depends on Zn(2+) as a cofactor.

The protein resides in the cytoplasm. It is found in the nucleus. The enzyme catalyses cytosine + H2O + H(+) = uracil + NH4(+). Its pathway is pyrimidine metabolism; UMP biosynthesis via salvage pathway; uracil from cytosine: step 1/1. Its function is as follows. Catalyzes the hydrolytic deamination of cytosine to uracil or 5-methylcytosine to thymine. Is involved in the pyrimidine salvage pathway, which allows the cell to utilize cytosine for pyrimidine nucleotide synthesis. The chain is Probable cytosine deaminase from Schizosaccharomyces pombe (strain 972 / ATCC 24843) (Fission yeast).